Consider the following 308-residue polypeptide: UDP-N-acetylenolpyruvoylglucosamine reductase (308 aa).

The region spanning 32 to 196 (VGGPAARLYK…ISAKLQLSPG (165 aa)) is the FAD-binding PCMH-type domain. Arg176 is an active-site residue. Catalysis depends on Ser225, which acts as the Proton donor. The active site involves Glu296.

Belongs to the MurB family. The cofactor is FAD.

The protein resides in the cytoplasm. The enzyme catalyses UDP-N-acetyl-alpha-D-muramate + NADP(+) = UDP-N-acetyl-3-O-(1-carboxyvinyl)-alpha-D-glucosamine + NADPH + H(+). Its pathway is cell wall biogenesis; peptidoglycan biosynthesis. Its function is as follows. Cell wall formation. This is UDP-N-acetylenolpyruvoylglucosamine reductase from Legionella pneumophila subsp. pneumophila (strain Philadelphia 1 / ATCC 33152 / DSM 7513).